Here is a 269-residue protein sequence, read N- to C-terminus: DNA-binding protein RFXANK (269 aa).

A disordered region spans residues 1–36; it reads MEPTQVAENLVPNQQPPVPDLEDPEDTRDESPENSD. ANK repeat units lie at residues 88-127, 132-161, 165-194, 198-227, and 231-260; these read LDSLSIHQLAAQGELSQLKDHLRKGACPACTCLSGNNLIN, RGFTPLIWASAFGEIETVRFLLDWGADPHI, ERESALSLASMGGYTDIVRLLLDRDVDINI, NGGTPLLYAVRGNHVKCVEALLARGADLTT, and SGYTPMDLAVALGYRKVQQVMESHILRLFQ.

Forms homodimers. The RFX heterotetrameric complex consists of 2 molecules of RFX5 and one each of RFXAP and RFX-B/RFXANK; with each subunit representing a separate complementation group. Interacts (via ankyrin repeats) with RFX5 (via PxLPxI/L motif); the interaction is direct. RFX forms cooperative DNA binding complexes with X2BP and CBF/NF-Y. RFX associates with CIITA to form an active transcriptional complex. Interacts with RAF1. Interacts with RFX7. Phosphorylated by RAF1. In terms of tissue distribution, expressed primarily in thymus, lung and testis.

It localises to the cytoplasm. The protein resides in the nucleus. In terms of biological role, activates transcription from class II MHC promoters. Activation requires the activity of the MHC class II transactivator/CIITA. May regulate other genes in the cell. RFX binds the X1 box of MHC-II promoters. May also potentiate the activation of RAF1. This chain is DNA-binding protein RFXANK (Rfxank), found in Mus musculus (Mouse).